Here is a 92-residue protein sequence, read N- to C-terminus: Defensin alpha 4 (92 aa).

The signal sequence occupies residues 1–19 (MKTLVLLSALVLLAFQVQA). Positions 20–58 (DPIQNTDEETKTEEQPGEEDQAVSISFGGQEGSALHEKS) are excised as a propeptide. The interval 23-42 (QNTDEETKTEEQPGEEDQAV) is disordered. Disulfide bonds link C64–C89, C66–C81, and C71–C88.

Belongs to the alpha-defensin family. In terms of tissue distribution, paneth cells of the small bowel.

Its subcellular location is the secreted. It localises to the cytoplasmic vesicle. The protein localises to the secretory vesicle. Its function is as follows. Host-defense peptide that has antimicrobial activity. Exhibits activity against Gram-negative E.coli (in vitro). Probably contributes to the antimicrobial barrier function of the small bowel mucosa. The sequence is that of Defensin alpha 4 from Mus musculus (Mouse).